Reading from the N-terminus, the 222-residue chain is Vespryn (222 aa).

The signal sequence occupies residues 1–44 (MSPSAGLQFSLYFLQTKKVLWKLTDKEKGLCYILLFTLCFFADQ). Positions 45–52 (ENGGKALA) are excised as a propeptide. Residues 53–159 (SPPGIWKRAD…RIWQMGLWWL (107 aa)) enclose the B30.2/SPRY domain. The propeptide occupies 160–222 (RHLETDPGRV…LGGTVSLTTL (63 aa)). An N-linked (GlcNAc...) asparagine glycan is attached at asparagine 195.

The protein belongs to the ohanin/vespryn family. As to expression, expressed by the venom gland.

The protein localises to the secreted. In terms of biological role, neurotoxin that produces dose-dependent hypolocomotion and hyperalgesia in mice. May directly act on the central nervous system, as it is 6500-fold more potent when administered intracerebroventricularly than intraperitoneal. The chain is Vespryn from Crotalus adamanteus (Eastern diamondback rattlesnake).